The primary structure comprises 1645 residues: Protein MON2 homolog (1645 aa).

This sequence belongs to the MON2 family.

In terms of biological role, may be required for traffic between late Golgi and early endosomes. This Caenorhabditis briggsae protein is Protein MON2 homolog.